A 94-amino-acid polypeptide reads, in one-letter code: Large ribosomal subunit protein uL23 (94 aa).

The protein belongs to the universal ribosomal protein uL23 family. Part of the 50S ribosomal subunit. Contacts protein L29, and trigger factor when it is bound to the ribosome.

In terms of biological role, one of the early assembly proteins it binds 23S rRNA. One of the proteins that surrounds the polypeptide exit tunnel on the outside of the ribosome. Forms the main docking site for trigger factor binding to the ribosome. The chain is Large ribosomal subunit protein uL23 from Dehalococcoides mccartyi (strain ATCC BAA-2100 / JCM 16839 / KCTC 5957 / BAV1).